The chain runs to 33 residues: Photosystem II reaction center protein Psb30 (33 aa).

The chain crosses the membrane as a helical span at residues 8–28 (QLTALAFIVLSGPLVIALLAF).

Belongs to the Psb30/Ycf12 family. PSII is composed of 1 copy each of membrane proteins PsbA, PsbB, PsbC, PsbD, PsbE, PsbF, PsbH, PsbI, PsbJ, PsbK, PsbL, PsbM, PsbT, PsbX, PsbY, PsbZ, Psb30/Ycf12, peripheral proteins of the oxygen-evolving complex and a large number of cofactors. It forms dimeric complexes.

The protein localises to the plastid. It localises to the chloroplast thylakoid membrane. Functionally, a core subunit of photosystem II (PSII), probably helps stabilize the reaction center. The chain is Photosystem II reaction center protein Psb30 from Staurastrum punctulatum (Green alga).